We begin with the raw amino-acid sequence, 210 residues long: Urease accessory protein UreG (210 aa).

14–21 (GPVGSGKT) lines the GTP pocket.

This sequence belongs to the SIMIBI class G3E GTPase family. UreG subfamily. In terms of assembly, homodimer. UreD, UreF and UreG form a complex that acts as a GTP-hydrolysis-dependent molecular chaperone, activating the urease apoprotein by helping to assemble the nickel containing metallocenter of UreC. The UreE protein probably delivers the nickel.

The protein resides in the cytoplasm. Functionally, facilitates the functional incorporation of the urease nickel metallocenter. This process requires GTP hydrolysis, probably effectuated by UreG. The protein is Urease accessory protein UreG of Rhodopseudomonas palustris (strain BisB5).